Reading from the N-terminus, the 367-residue chain is Chorismate synthase (367 aa).

NADP(+) is bound at residue Arg-48. Residues 125–127, Gly-290, 305–309, and Arg-333 contribute to the FMN site; these read RAS and KPTSS.

It belongs to the chorismate synthase family. In terms of assembly, homotetramer. It depends on FMNH2 as a cofactor.

It catalyses the reaction 5-O-(1-carboxyvinyl)-3-phosphoshikimate = chorismate + phosphate. Its pathway is metabolic intermediate biosynthesis; chorismate biosynthesis; chorismate from D-erythrose 4-phosphate and phosphoenolpyruvate: step 7/7. Functionally, catalyzes the anti-1,4-elimination of the C-3 phosphate and the C-6 proR hydrogen from 5-enolpyruvylshikimate-3-phosphate (EPSP) to yield chorismate, which is the branch point compound that serves as the starting substrate for the three terminal pathways of aromatic amino acid biosynthesis. This reaction introduces a second double bond into the aromatic ring system. This Protochlamydia amoebophila (strain UWE25) protein is Chorismate synthase.